Consider the following 316-residue polypeptide: Olfactory receptor 51J1 (316 aa).

At 1–31 the chain is on the extracellular side; sequence MKISNNSLGFLPTTFILVGIPGLESEHLWIS. N5 carries an N-linked (GlcNAc...) asparagine glycan. A helical membrane pass occupies residues 32–52; the sequence is VPFSLIYIIIFLGNGIILHVI. Residues 53 to 63 are Cytoplasmic-facing; the sequence is RTDIALHQPMY. A helical transmembrane segment spans residues 64 to 84; that stretch reads LFLAMLALAEVRVSASTLPTV. Residues 85 to 104 are Extracellular-facing; sequence LGIFLFGNTEISLEACLFPD. A disulfide bridge connects residues C100 and C191. The chain crosses the membrane as a helical span at residues 105-125; that stretch reads VLHPFFIHDGASCAAGHVFGP. Topologically, residues 126–161 are cytoplasmic; sequence LYSHLQPTELHSYPDTAQGLWHRSYYRTEKHYAHGS. Residues 162–182 traverse the membrane as a helical segment; it reads VAHSLMASALLWPQCPLTFLL. At 183-191 the chain is on the extracellular side; it reads SAPQSYLSC. A helical membrane pass occupies residues 192–212; it reads GNISVNNIYGIFIVTSTFGLD. The Cytoplasmic portion of the chain corresponds to 213–242; sequence SLLIVISYGLILHTVLGIATGEGRKKALNT. The chain crosses the membrane as a helical span at residues 243 to 263; sequence CGSHVCAVLAYYVPMIGLSIV. Residues 264–275 lie on the Extracellular side of the membrane; it reads HRLGHRVSPLLQ. The chain crosses the membrane as a helical span at residues 276–296; sequence AMMANAYLFFPPVVNPIVYSI. The Cytoplasmic portion of the chain corresponds to 297–316; it reads KTKEIHGAIVRMLLEKRRRV.

This sequence belongs to the G-protein coupled receptor 1 family.

It is found in the cell membrane. Its function is as follows. Odorant receptor. The sequence is that of Olfactory receptor 51J1 (OR51J1) from Homo sapiens (Human).